Reading from the N-terminus, the 789-residue chain is Disintegrin and metalloproteinase domain-containing protein 7 (789 aa).

The N-terminal stretch at 1 to 25 (MFPTGIFLMSVLISQMQGRGIVGVE) is a signal peptide. The propeptide occupies 26–176 (GQELVHPKKL…NYSCEGLNFT (151 aa)). N-linked (GlcNAc...) asparagine glycosylation is found at N84, N167, and N174. Residues 177–668 (KKSTLIDAKI…WGEALNLTSV (492 aa)) are Extracellular-facing. A Peptidase M12B domain is found at 199–393 (KFIELFVVAD…QKPACILNNP (195 aa)). 4 disulfide bridges follow: C310/C388, C350/C372, C352/C357, and C459/C479. One can recognise a Disintegrin domain in the interval 401 to 487 (YPFCGNKKVD…ECPKDESQAN (87 aa)). N583, N628, and N664 each carry an N-linked (GlcNAc...) asparagine glycan. The helical transmembrane segment at 669–689 (SIMVVVLVMVIIGVGLVILLI) threads the bilayer. At 690-789 (RYQKCIKMKQ…DSQSDCTRLG (100 aa)) the chain is on the cytoplasmic side. Residues 762 to 771 (DPRGIADPKQ) are compositionally biased toward basic and acidic residues. The segment at 762–789 (DPRGIADPKQNDNMNLNLDSQSDCTRLG) is disordered. The segment covering 772 to 789 (NDNMNLNLDSQSDCTRLG) has biased composition (polar residues).

As to quaternary structure, interacts with ITM2B in sperm; the interaction increases following capacitation. Interacts with HSPA5 and CANX. Expressed specifically in the caput region of the epididymis (at protein level).

The protein localises to the membrane. Functionally, required for normal male fertility via maintenance of epithelial cell morphology in the caput epididymis and subsequently correct epididymis lumen structure required for sperm development. Plays a role in sperm motility, flagella morphology and tyrosine phosphorylation during sperm capacitance. Plays a role in normal expression levels of HSPA5, ITM2B and ADAM2 in sperm both prior to and post-capacitation. This is a non catalytic metalloprotease-like protein. The sequence is that of Disintegrin and metalloproteinase domain-containing protein 7 from Rattus norvegicus (Rat).